The following is a 191-amino-acid chain: Ciliary microtubule-associated protein 3 (191 aa).

Interacts with proteins involved in ciliary transport, including ARL13B, CETN1, KIF3A, RAB6A, RAB8A, TUBB1 and TUBG1. Interacts with AURKA.

The protein localises to the cytoplasmic vesicle. It is found in the golgi apparatus. The protein resides in the trans-Golgi network. It localises to the cytoplasm. In terms of biological role, during primary cilia disassembly, involved in cilia disassembly. Required specifically to control cilia retraction as well as the liberation and duplication of the basal body/centrosome. May act by stimulating AURKA activity at the basal body in a cell cycle-dependent manner. The chain is Ciliary microtubule-associated protein 3 from Homo sapiens (Human).